Reading from the N-terminus, the 209-residue chain is Large ribosomal subunit protein uL3 (209 aa).

The tract at residues 127–152 (SGGPSSHGSKFHRHLGSTGQAATPSR) is disordered. Positions 143 to 152 (STGQAATPSR) are enriched in polar residues.

This sequence belongs to the universal ribosomal protein uL3 family. Part of the 50S ribosomal subunit. Forms a cluster with proteins L14 and L19.

Functionally, one of the primary rRNA binding proteins, it binds directly near the 3'-end of the 23S rRNA, where it nucleates assembly of the 50S subunit. The polypeptide is Large ribosomal subunit protein uL3 (Borrelia hermsii (strain HS1 / DAH)).